A 300-amino-acid chain; its full sequence is Protein FANTASTIC FOUR 4 (300 aa).

Over residues 30–56 (PQLSTPLKSHFQNSSIAPQDNPITINA) the composition is skewed to polar residues. Disordered stretches follow at residues 30-104 (PQLS…SPSS), 142-170 (TMET…LPPP), and 227-264 (TETK…KEEE). 2 stretches are compositionally biased toward low complexity: residues 58–88 (SLPS…NSSS) and 142–151 (TMETRTTSTT). Residues 166 to 217 (SLPPPLTSMIGFDCIEVKSHRENGRLVMMATRPPPRNRCLQDRSNGCVRLAI) form the FAF domain. A compositionally biased stretch (acidic residues) spans 233–262 (KEEEEEETIETVRDNEEEIPEYKEEEEEKE).

The protein belongs to the fantastic four family. In terms of tissue distribution, expressed in the shoot apex and young siliques. Detected in provascular and vascular tissue, but not in the vegetative meristem. In inflorescences, restricted to the base of the flower and to the vasculature of the stem and the pedicels, but absent from young flowers. Detected in the center of the inflorescence meristem.

Its function is as follows. Regulates the size of the shoot meristem by modulating the CLV3-WUS feedback loop. Can repress WUS but is under negative control by CLV3. In Arabidopsis thaliana (Mouse-ear cress), this protein is Protein FANTASTIC FOUR 4 (FAF4).